Here is a 183-residue protein sequence, read N- to C-terminus: Adenylate kinase (183 aa).

12–17 contacts ATP; that stretch reads GAGKGT. Residues 32 to 61 are NMP; the sequence is STGDLLRSEVAAGTALGQEAEAVMNRGELV. AMP contacts are provided by residues T33, R38, 59-61, 86-89, and Q93; these read ELV and GFPR. The segment at 127 to 133 is LID; the sequence is ARGRDDD. Position 128 (R128) interacts with ATP. Positions 130 and 141 each coordinate AMP. G169 contributes to the ATP binding site.

It belongs to the adenylate kinase family. In terms of assembly, monomer.

Its subcellular location is the cytoplasm. It carries out the reaction AMP + ATP = 2 ADP. It participates in purine metabolism; AMP biosynthesis via salvage pathway; AMP from ADP: step 1/1. Catalyzes the reversible transfer of the terminal phosphate group between ATP and AMP. Plays an important role in cellular energy homeostasis and in adenine nucleotide metabolism. In Parasynechococcus marenigrum (strain WH8102), this protein is Adenylate kinase.